A 109-amino-acid polypeptide reads, in one-letter code: YLTEISGKGHIEIVKCLVNLGANITTNNNYAIIQASEKGHLEVVKYLVGQNANIRSENNLAVRLASGNGHLEVVEYLVNLGADIRSENNYAIQSASQNGHLEVIEYLVA.

ANK repeat units lie at residues 1–26 (YLTE…NITT), 27–56 (NNNY…NIRS), 57–86 (ENNL…DIRS), and 88–109 (NNYA…YLVA).

The protein is Putative ankyrin repeat protein L482 of Acanthamoeba polyphaga (Amoeba).